The chain runs to 397 residues: 1-deoxy-D-xylulose 5-phosphate reductoisomerase (397 aa).

8 residues coordinate NADPH: threonine 12, glycine 13, serine 14, isoleucine 15, glycine 38, lysine 39, asparagine 40, and asparagine 126. A 1-deoxy-D-xylulose 5-phosphate-binding site is contributed by lysine 127. An NADPH-binding site is contributed by glutamate 128. Position 152 (aspartate 152) interacts with Mn(2+). 1-deoxy-D-xylulose 5-phosphate is bound by residues serine 153, glutamate 154, serine 188, and histidine 211. Residue glutamate 154 coordinates Mn(2+). Position 217 (glycine 217) interacts with NADPH. 1-deoxy-D-xylulose 5-phosphate contacts are provided by serine 224, asparagine 229, lysine 230, and glutamate 233. Residue glutamate 233 coordinates Mn(2+).

It belongs to the DXR family. Mg(2+) is required as a cofactor. Mn(2+) serves as cofactor.

It catalyses the reaction 2-C-methyl-D-erythritol 4-phosphate + NADP(+) = 1-deoxy-D-xylulose 5-phosphate + NADPH + H(+). Its pathway is isoprenoid biosynthesis; isopentenyl diphosphate biosynthesis via DXP pathway; isopentenyl diphosphate from 1-deoxy-D-xylulose 5-phosphate: step 1/6. Functionally, catalyzes the NADPH-dependent rearrangement and reduction of 1-deoxy-D-xylulose-5-phosphate (DXP) to 2-C-methyl-D-erythritol 4-phosphate (MEP). This Haemophilus influenzae (strain 86-028NP) protein is 1-deoxy-D-xylulose 5-phosphate reductoisomerase.